The chain runs to 192 residues: Glycerol-3-phosphate acyltransferase (192 aa).

Transmembrane regions (helical) follow at residues 5 to 25, 50 to 70, 78 to 98, 112 to 132, and 153 to 173; these read VVLI…ITRI, FLAA…VYIA, DFYI…PIWL, ILIA…IIVF, and SFFF…LVFL.

Belongs to the PlsY family. Probably interacts with PlsX.

Its subcellular location is the cell membrane. It catalyses the reaction an acyl phosphate + sn-glycerol 3-phosphate = a 1-acyl-sn-glycero-3-phosphate + phosphate. Its pathway is lipid metabolism; phospholipid metabolism. Catalyzes the transfer of an acyl group from acyl-phosphate (acyl-PO(4)) to glycerol-3-phosphate (G3P) to form lysophosphatidic acid (LPA). This enzyme utilizes acyl-phosphate as fatty acyl donor, but not acyl-CoA or acyl-ACP. This Wolbachia pipientis wMel protein is Glycerol-3-phosphate acyltransferase.